Reading from the N-terminus, the 367-residue chain is Probable butyrate kinase (367 aa).

It belongs to the acetokinase family.

It localises to the cytoplasm. It catalyses the reaction butanoate + ATP = butanoyl phosphate + ADP. This is Probable butyrate kinase from Bacillus cereus (strain ATCC 10987 / NRS 248).